A 608-amino-acid polypeptide reads, in one-letter code: Thiol:disulfide interchange protein DsbD (608 aa).

Positions Met-1–Ala-22 are cleaved as a signal peptide. An intrachain disulfide couples Cys-135 to Cys-141. Residues Ser-161 to Glu-173 are compositionally biased toward polar residues. A disordered region spans residues Ser-161–Glu-180. Transmembrane regions (helical) follow at residues Leu-194–Phe-214, Phe-241–Ala-261, Ile-273–Phe-293, Gly-314–Cys-334, Val-352–Ile-372, Trp-387–Leu-407, Val-414–Ala-434, and Ser-456–Pro-476. An intrachain disulfide couples Cys-212 to Cys-334. One can recognise a Thioredoxin domain in the interval Leu-469–Lys-608. Cysteines 522 and 525 form a disulfide.

The protein belongs to the thioredoxin family. DsbD subfamily.

It is found in the cell inner membrane. It carries out the reaction [protein]-dithiol + NAD(+) = [protein]-disulfide + NADH + H(+). It catalyses the reaction [protein]-dithiol + NADP(+) = [protein]-disulfide + NADPH + H(+). In terms of biological role, required to facilitate the formation of correct disulfide bonds in some periplasmic proteins and for the assembly of the periplasmic c-type cytochromes. Acts by transferring electrons from cytoplasmic thioredoxin to the periplasm. This transfer involves a cascade of disulfide bond formation and reduction steps. This Colwellia psychrerythraea (strain 34H / ATCC BAA-681) (Vibrio psychroerythus) protein is Thiol:disulfide interchange protein DsbD.